A 683-amino-acid polypeptide reads, in one-letter code: Methionine--tRNA ligase (683 aa).

Positions 15-25 (PYANGPIHLGH) match the 'HIGH' region motif. 4 residues coordinate Zn(2+): C146, C149, C159, and C162. Positions 332–336 (KMSKS) match the 'KMSKS' region motif. K335 is an ATP binding site. The tRNA-binding domain occupies 582–683 (DFAKIDLRIA…EGALPGMRVK (102 aa)).

This sequence belongs to the class-I aminoacyl-tRNA synthetase family. MetG type 1 subfamily. Homodimer. It depends on Zn(2+) as a cofactor.

It is found in the cytoplasm. It catalyses the reaction tRNA(Met) + L-methionine + ATP = L-methionyl-tRNA(Met) + AMP + diphosphate. Functionally, is required not only for elongation of protein synthesis but also for the initiation of all mRNA translation through initiator tRNA(fMet) aminoacylation. In Shewanella frigidimarina (strain NCIMB 400), this protein is Methionine--tRNA ligase.